A 77-amino-acid chain; its full sequence is U8-lycotoxin-Ls1p (77 aa).

Positions 1–20 are cleaved as a signal peptide; the sequence is MKLMIFTGLVLFAIVSLIEA. Positions 21-26 are excised as a propeptide; it reads QAENEK.

This sequence belongs to the neurotoxin 19 (CSTX) family. 08 (U8-Lctx) subfamily. Post-translationally, contains 4 disulfide bonds. As to expression, expressed by the venom gland.

It localises to the secreted. In Lycosa singoriensis (Wolf spider), this protein is U8-lycotoxin-Ls1p.